Consider the following 369-residue polypeptide: Peptide chain release factor 2 (369 aa).

Gln-249 is subject to N5-methylglutamine.

This sequence belongs to the prokaryotic/mitochondrial release factor family. Post-translationally, methylated by PrmC. Methylation increases the termination efficiency of RF2.

The protein resides in the cytoplasm. Its function is as follows. Peptide chain release factor 2 directs the termination of translation in response to the peptide chain termination codons UGA and UAA. This is Peptide chain release factor 2 from Thermosipho melanesiensis (strain DSM 12029 / CIP 104789 / BI429).